Consider the following 373-residue polypeptide: Gametogenetin-binding protein 1 (373 aa).

Disordered stretches follow at residues Val26–Thr113 and Lys237–Glu268. The span at Asn36–Glu49 shows a compositional bias: polar residues. A required for induction of mitochondrial fragmentation region spans residues Leu226–Glu373. Basic and acidic residues predominate over residues Ser254–Glu263. Residues Lys301–Glu373 form an interaction with GGN region.

As to quaternary structure, interacts with CCDC159. Interacts with GGN.

It localises to the cytoplasm. It is found in the membrane. Its subcellular location is the golgi apparatus. The protein resides in the mitochondrion intermembrane space. Its function is as follows. Induces mitochondrial fragmentation, possibly by promoting DNM1L-dependent fission and may play a role in mitochondrial morphogenesis during spermatogenesis. This chain is Gametogenetin-binding protein 1 (Ggnbp1), found in Rattus norvegicus (Rat).